Consider the following 326-residue polypeptide: Peroxidase 39 (326 aa).

An N-terminal signal peptide occupies residues 1–23 (MTRFGLALLMILVIQGLVTFSEA). 4 disulfides stabilise this stretch: C34–C114, C67–C72, C120–C322, and C199–C232. H65 (proton acceptor) is an active-site residue. Positions 66, 69, 71, 73, and 75 each coordinate Ca(2+). An N-linked (GlcNAc...) asparagine glycan is attached at N79. A substrate-binding site is contributed by P162. N167 is a glycosylation site (N-linked (GlcNAc...) asparagine). Position 192 (H192) interacts with heme b. A Ca(2+)-binding site is contributed by T193. N-linked (GlcNAc...) asparagine glycosylation is found at N208 and N238. Positions 245, 248, and 253 each coordinate Ca(2+).

Belongs to the peroxidase family. Classical plant (class III) peroxidase subfamily. Heme b serves as cofactor. The cofactor is Ca(2+). In terms of tissue distribution, slightly expressed in roots.

It localises to the secreted. The enzyme catalyses 2 a phenolic donor + H2O2 = 2 a phenolic radical donor + 2 H2O. Its function is as follows. Removal of H(2)O(2), oxidation of toxic reductants, biosynthesis and degradation of lignin, suberization, auxin catabolism, response to environmental stresses such as wounding, pathogen attack and oxidative stress. These functions might be dependent on each isozyme/isoform in each plant tissue. The protein is Peroxidase 39 (PER39) of Arabidopsis thaliana (Mouse-ear cress).